The chain runs to 156 residues: Small ribosomal subunit protein uS7 (156 aa).

Belongs to the universal ribosomal protein uS7 family. As to quaternary structure, part of the 30S ribosomal subunit. Contacts proteins S9 and S11.

Its function is as follows. One of the primary rRNA binding proteins, it binds directly to 16S rRNA where it nucleates assembly of the head domain of the 30S subunit. Is located at the subunit interface close to the decoding center, probably blocks exit of the E-site tRNA. The protein is Small ribosomal subunit protein uS7 of Lactobacillus johnsonii (strain CNCM I-12250 / La1 / NCC 533).